The chain runs to 604 residues: Glutamine--fructose-6-phosphate aminotransferase [isomerizing] (604 aa).

Cys-2 (nucleophile; for GATase activity) is an active-site residue. Residues 2-218 (CGIVGVVGNR…DKELVILTKD (217 aa)) enclose the Glutamine amidotransferase type-2 domain. 2 consecutive SIS domains span residues 284–423 (IITS…ANGK) and 456–594 (VQAL…VDKP). Residue Lys-599 is the For Fru-6P isomerization activity of the active site.

Homodimer.

It localises to the cytoplasm. The enzyme catalyses D-fructose 6-phosphate + L-glutamine = D-glucosamine 6-phosphate + L-glutamate. Functionally, catalyzes the first step in hexosamine metabolism, converting fructose-6P into glucosamine-6P using glutamine as a nitrogen source. This chain is Glutamine--fructose-6-phosphate aminotransferase [isomerizing], found in Streptococcus pyogenes serotype M18 (strain MGAS8232).